Here is a 349-residue protein sequence, read N- to C-terminus: MKFTFHKVTLKKRFPLAISRGVRYNSENLFVCYEKDGHIGWGEAAPGNSEGAATAEAVQEALENFIATGIEGFSIQELYDRAREMKIPPCAYVALDTAFWDWTAKKAQLPLRQLLGFSKPHTPTSVTIGINPPEVIKERVPLLLEGTTVQSLKIKLGSPEGIDADKTMFEQVVESTKKYPVKLRVDANGGWDVNQAQHMMQWLADRKVDYIEQPLKEGDEAGLKTLFKSRPLPIYVDESCRFSQNIPSFAAHVDGVNMKLMKCGGITEALRIIGTARAHGLKTMIGCMSESSVAIAAAAAMTGGIDHIDLDSHYNLAPDPAHGAPLINGVTLPPEIPGHGAYLKEEFYA.

Substrate-binding positions include Thr127 and 153 to 155 (KIK). Mg(2+) contacts are provided by Asp186, Glu212, and Asp237. Substrate contacts are provided by residues Lys259 and 309–311 (DLD).

This sequence belongs to the mandelate racemase/muconate lactonizing enzyme family. Mg(2+) is required as a cofactor.

Its function is as follows. Catalyzes the epimerization a variety of hydrophobic dipeptides. Epimerase activity is highest with L-Ala-L-Tyr, and lower with L-Ala-L-Met, L-Ala-L-Phe, L-Tyr-L-Ala, L-Tyr-L-Met and L-Tyr-L-Trp (in vitro). The polypeptide is Hydrophobic dipeptide epimerase (Flavobacteria bacterium (strain MS024-2A)).